The chain runs to 393 residues: Short-chain dehydrogenase/reductase family 42E member 1 (393 aa).

Catalysis depends on Tyr-152, which acts as the Proton acceptor. Lys-156 is an NAD(+) binding site. Helical transmembrane passes span 282 to 302 (LPLT…FILG) and 371 to 391 (GLLV…SVIL).

It belongs to the 3-beta-HSD family.

Its subcellular location is the membrane. The chain is Short-chain dehydrogenase/reductase family 42E member 1 (SDR42E1) from Homo sapiens (Human).